The primary structure comprises 564 residues: Dihydroxy-acid dehydratase 2 (564 aa).

Position 59 (cysteine 59) interacts with [2Fe-2S] cluster. Aspartate 91 contacts Mg(2+). Cysteine 132 contacts [2Fe-2S] cluster. Residues aspartate 133 and lysine 134 each contribute to the Mg(2+) site. N6-carboxylysine is present on lysine 134. Cysteine 204 provides a ligand contact to [2Fe-2S] cluster. Residue glutamate 454 coordinates Mg(2+). Serine 480 functions as the Proton acceptor in the catalytic mechanism.

Belongs to the IlvD/Edd family. Homodimer. Requires [2Fe-2S] cluster as cofactor. The cofactor is Mg(2+).

It catalyses the reaction (2R)-2,3-dihydroxy-3-methylbutanoate = 3-methyl-2-oxobutanoate + H2O. The enzyme catalyses (2R,3R)-2,3-dihydroxy-3-methylpentanoate = (S)-3-methyl-2-oxopentanoate + H2O. It functions in the pathway amino-acid biosynthesis; L-isoleucine biosynthesis; L-isoleucine from 2-oxobutanoate: step 3/4. The protein operates within amino-acid biosynthesis; L-valine biosynthesis; L-valine from pyruvate: step 3/4. Functionally, functions in the biosynthesis of branched-chain amino acids. Catalyzes the dehydration of (2R,3R)-2,3-dihydroxy-3-methylpentanoate (2,3-dihydroxy-3-methylvalerate) into 2-oxo-3-methylpentanoate (2-oxo-3-methylvalerate) and of (2R)-2,3-dihydroxy-3-methylbutanoate (2,3-dihydroxyisovalerate) into 2-oxo-3-methylbutanoate (2-oxoisovalerate), the penultimate precursor to L-isoleucine and L-valine, respectively. The polypeptide is Dihydroxy-acid dehydratase 2 (Staphylococcus saprophyticus subsp. saprophyticus (strain ATCC 15305 / DSM 20229 / NCIMB 8711 / NCTC 7292 / S-41)).